Here is a 336-residue protein sequence, read N- to C-terminus: Dihydroorotate dehydrogenase (quinone) (336 aa).

FMN is bound by residues 62–66 (AGLDK) and T86. K66 is a substrate binding site. 111 to 115 (NRMGF) contributes to the substrate binding site. N139 and N172 together coordinate FMN. N172 is a substrate binding site. The active-site Nucleophile is the S175. N177 contacts substrate. FMN is bound by residues K217 and T245. Residue 246-247 (NT) participates in substrate binding. FMN contacts are provided by residues G268, G297, and 318–319 (YS).

Belongs to the dihydroorotate dehydrogenase family. Type 2 subfamily. As to quaternary structure, monomer. Requires FMN as cofactor.

The protein localises to the cell membrane. It catalyses the reaction (S)-dihydroorotate + a quinone = orotate + a quinol. It functions in the pathway pyrimidine metabolism; UMP biosynthesis via de novo pathway; orotate from (S)-dihydroorotate (quinone route): step 1/1. Its function is as follows. Catalyzes the conversion of dihydroorotate to orotate with quinone as electron acceptor. This is Dihydroorotate dehydrogenase (quinone) from Proteus mirabilis (strain HI4320).